A 248-amino-acid polypeptide reads, in one-letter code: N-acylneuraminate-9-phosphatase (248 aa).

Mg(2+) is bound at residue aspartate 12. Phosphate is bound by residues leucine 13, aspartate 14, threonine 131, asparagine 132, and lysine 164. Residue aspartate 14 coordinates Mg(2+). Aspartate 189 serves as a coordination point for Mg(2+).

It belongs to the HAD-like hydrolase superfamily. NANP family. Requires Mg(2+) as cofactor.

It catalyses the reaction N-acetylneuraminate 9-phosphate + H2O = N-acetylneuraminate + phosphate. The enzyme catalyses N-glycoloylneuraminate 9-phosphate + H2O = N-glycoloylneuraminate + phosphate. It participates in amino-sugar metabolism; N-acetylneuraminate biosynthesis. Inhibited by calcium. Inhibited by vanadate, sodium orthovanadate and phosphonate. In terms of biological role, catalyzes the dephosphorylation of N-acylneuraminate 9-phosphate (Neu5Ac-9-P) to N-acetylneuraminic acid (Neu5Ac or sialic acid). Can also use N-glycoloylneuraminate 9-phosphate as substrate. The polypeptide is N-acylneuraminate-9-phosphatase (Rattus norvegicus (Rat)).